The following is a 101-amino-acid chain: Protein Tat (101 aa).

A compositionally biased stretch (basic and acidic residues) spans 1–12 (MEPVDPRLEPWK). Residues 1–20 (MEPVDPRLEPWKHPGSQPKT) are disordered. The interval 1-24 (MEPVDPRLEPWKHPGSQPKTACTT) is interaction with human CREBBP. Positions 1 to 48 (MEPVDPRLEPWKHPGSQPKTACTTCYCKKCCFHCQVCFTKKALGISYG) are transactivation. C22, C25, and C27 together coordinate Zn(2+). Residues 22–37 (CTTCYCKKCCFHCQVC) are cysteine-rich. K28 carries the N6-acetyllysine; by host PCAF modification. Positions 30, 33, 34, and 37 each coordinate Zn(2+). The interval 38–48 (FTKKALGISYG) is core. A disordered region spans residues 47-101 (YGRKKRRQRRRAPEDSQTHQVSLPKQPAPQFRGDPTGPKESKKKVERETETHPVD). The Nuclear localization signal, RNA-binding (TAR), and protein transduction signature appears at 49–57 (RKKRRQRRR). Residues 49-86 (RKKRRQRRRAPEDSQTHQVSLPKQPAPQFRGDPTGPKE) form an interaction with the host capping enzyme RNGTT region. An N6-acetyllysine; by host EP300 and GCN5L2 mark is found at K50 and K51. Residues R52 and R53 each carry the asymmetric dimethylarginine; by host PRMT6 modification. A Glycyl lysine isopeptide (Lys-Gly) (interchain with G-Cter in ubiquitin) cross-link involves residue K71. The Cell attachment site signature appears at 78–80 (RGD). The span at 83 to 101 (GPKESKKKVERETETHPVD) shows a compositional bias: basic and acidic residues.

Belongs to the lentiviruses Tat family. In terms of assembly, interacts with host CCNT1. Associates with the P-TEFb complex composed at least of Tat, P-TEFb (CDK9 and CCNT1), TAR RNA, RNA Pol II. Recruits the HATs CREBBP, TAF1/TFIID, EP300, PCAF and GCN5L2. Interacts with host KAT5/Tip60; this interaction targets the latter to degradation. Interacts with the host deacetylase SIRT1. Interacts with host capping enzyme RNGTT; this interaction stimulates RNGTT. Binds to host KDR, and to the host integrins ITGAV/ITGB3 and ITGA5/ITGB1. Interacts with host KPNB1/importin beta-1 without previous binding to KPNA1/importin alpha-1. Interacts with EIF2AK2. Interacts with host nucleosome assembly protein NAP1L1; this interaction may be required for the transport of Tat within the nucleus, since the two proteins interact at the nuclear rim. Interacts with host C1QBP/SF2P32; this interaction involves lysine-acetylated Tat. Interacts with the host chemokine receptors CCR2, CCR3 and CXCR4. Interacts with host DPP4/CD26; this interaction may trigger an anti-proliferative effect. Interacts with host LDLR. Interacts with the host extracellular matrix metalloproteinase MMP1. Interacts with host PRMT6; this interaction mediates Tat's methylation. Interacts with, and is ubiquitinated by MDM2/Hdm2. Interacts with host PSMC3 and HTATIP2. Interacts with STAB1; this interaction may overcome SATB1-mediated repression of IL2 and IL2RA (interleukin) in T cells by binding to the same domain than HDAC1. Interacts (when acetylated) with human CDK13, thereby increasing HIV-1 mRNA splicing and promoting the production of the doubly spliced HIV-1 protein Nef. Interacts with host TBP; this interaction modulates the activity of transcriptional pre-initiation complex. Interacts with host RELA. Interacts with host PLSCR1; this interaction negatively regulates Tat transactivation activity by altering its subcellular distribution. Asymmetrical arginine methylation by host PRMT6 seems to diminish the transactivation capacity of Tat and affects the interaction with host CCNT1. Post-translationally, acetylation by EP300, CREBBP, GCN5L2/GCN5 and PCAF regulates the transactivation activity of Tat. EP300-mediated acetylation of Lys-50 promotes dissociation of Tat from the TAR RNA through the competitive binding to PCAF's bromodomain. In addition, the non-acetylated Tat's N-terminus can also interact with PCAF. PCAF-mediated acetylation of Lys-28 enhances Tat's binding to CCNT1. Lys-50 is deacetylated by SIRT1. In terms of processing, polyubiquitination by host MDM2 does not target Tat to degradation, but activates its transactivation function and fosters interaction with CCNT1 and TAR RNA. Phosphorylated by EIF2AK2 on serine and threonine residues adjacent to the basic region important for TAR RNA binding and function. Phosphorylation of Tat by EIF2AK2 is dependent on the prior activation of EIF2AK2 by dsRNA.

The protein resides in the host nucleus. The protein localises to the host nucleolus. It localises to the host cytoplasm. Its subcellular location is the secreted. Its function is as follows. Transcriptional activator that increases RNA Pol II processivity, thereby increasing the level of full-length viral transcripts. Recognizes a hairpin structure at the 5'-LTR of the nascent viral mRNAs referred to as the transactivation responsive RNA element (TAR) and recruits the cyclin T1-CDK9 complex (P-TEFb complex) that will in turn hyperphosphorylate the RNA polymerase II to allow efficient elongation. The CDK9 component of P-TEFb and other Tat-activated kinases hyperphosphorylate the C-terminus of RNA Pol II that becomes stabilized and much more processive. Other factors such as HTATSF1/Tat-SF1, SUPT5H/SPT5, and HTATIP2 are also important for Tat's function. Besides its effect on RNA Pol II processivity, Tat induces chromatin remodeling of proviral genes by recruiting the histone acetyltransferases (HATs) CREBBP, EP300 and PCAF to the chromatin. This also contributes to the increase in proviral transcription rate, especially when the provirus integrates in transcriptionally silent region of the host genome. To ensure maximal activation of the LTR, Tat mediates nuclear translocation of NF-kappa-B by interacting with host RELA. Through its interaction with host TBP, Tat may also modulate transcription initiation. Tat can reactivate a latently infected cell by penetrating in it and transactivating its LTR promoter. In the cytoplasm, Tat is thought to act as a translational activator of HIV-1 mRNAs. Functionally, extracellular circulating Tat can be endocytosed by surrounding uninfected cells via the binding to several surface receptors such as CD26, CXCR4, heparan sulfate proteoglycans (HSPG) or LDLR. Neurons are rarely infected, but they internalize Tat via their LDLR. Through its interaction with nuclear HATs, Tat is potentially able to control the acetylation-dependent cellular gene expression. Modulates the expression of many cellular genes involved in cell survival, proliferation or in coding for cytokines or cytokine receptors. Tat plays a role in T-cell and neurons apoptosis. Tat induced neurotoxicity and apoptosis probably contribute to neuroAIDS. Circulating Tat also acts as a chemokine-like and/or growth factor-like molecule that binds to specific receptors on the surface of the cells, affecting many cellular pathways. In the vascular system, Tat binds to ITGAV/ITGB3 and ITGA5/ITGB1 integrins dimers at the surface of endothelial cells and competes with bFGF for heparin-binding sites, leading to an excess of soluble bFGF. The protein is Protein Tat of Human immunodeficiency virus type 1 group M subtype B (isolate MN) (HIV-1).